A 154-amino-acid chain; its full sequence is Ribonuclease H (154 aa).

Positions 5–147 (GKSRVAIYTD…ADMLARGEVE (143 aa)) constitute an RNase H type-1 domain. Residues D14, E53, D75, and D139 each coordinate Mg(2+).

This sequence belongs to the RNase H family. As to quaternary structure, monomer. It depends on Mg(2+) as a cofactor.

The protein resides in the cytoplasm. The catalysed reaction is Endonucleolytic cleavage to 5'-phosphomonoester.. In terms of biological role, endonuclease that specifically degrades the RNA of RNA-DNA hybrids. The polypeptide is Ribonuclease H (Anaplasma marginale (strain St. Maries)).